We begin with the raw amino-acid sequence, 268 residues long: Secreted RxLR effector protein 6 (268 aa).

The N-terminal stretch at 1–19 (MRGAFYIAIALLVVRSRTA) is a signal peptide. The short motif at 48–63 (RYLRDGLAHSAANEER) is the RxLR-dEER element. Positions 90 to 123 (IGGHSHTPKSKRKVNLSPAKSQSGIRKKSTSINK) are disordered. Polar residues predominate over residues 107-123 (PAKSQSGIRKKSTSINK).

Belongs to the RxLR effector family.

The protein resides in the secreted. Its subcellular location is the host nucleus. The protein localises to the host cytoplasm. In terms of biological role, secreted effector that completely suppresses the host cell death induced by cell death-inducing proteins. The protein is Secreted RxLR effector protein 6 of Plasmopara viticola (Downy mildew of grapevine).